The chain runs to 92 residues: YcgL domain-containing protein VC_1957 (92 aa).

The region spanning 1-84 is the YcgL domain; it reads MLCSIYKSPK…PPENLLEQHK (84 aa). Residues 69–92 are disordered; sequence FLQLPPPPENLLEQHKERKARQTP.

The sequence is that of YcgL domain-containing protein VC_1957 from Vibrio cholerae serotype O1 (strain ATCC 39315 / El Tor Inaba N16961).